The primary structure comprises 222 residues: Transcriptional regulatory protein PmrA (222 aa).

The Response regulatory domain occupies 2 to 116 (KLLIVEDDKL…ELQARVRALI (115 aa)). Asp-51 carries the 4-aspartylphosphate modification. Residues 124-218 (NSKIQVDNIT…LRGFGYLLTK (95 aa)) constitute a DNA-binding region (ompR/PhoB-type).

Post-translationally, phosphorylated by PmrB.

It is found in the cytoplasm. Member of the two-component regulatory system PmrB/PmrA involved in regulation of virulence. Unphosphorylated PmrA represses extracellular enzyme genes. Phosphorylation of PmrA by PmrB relieves such repression, which leads to activation of extracellular enzyme genes. Phosphorylated PmrA seems to repress expression of the pmrCAB operon. This is Transcriptional regulatory protein PmrA (pmrA) from Pectobacterium parmentieri.